The following is a 166-amino-acid chain: Large ribosomal subunit protein uL11 (166 aa).

Belongs to the universal ribosomal protein uL11 family.

The protein is Large ribosomal subunit protein uL11 (rpl12) of Dictyostelium discoideum (Social amoeba).